Consider the following 221-residue polypeptide: LHFPL tetraspan subfamily member 5 protein (221 aa).

At 1 to 24 (MPKLLPAQEAARIYHTNYVRNARA) the chain is on the cytoplasmic side. Residues 25-45 (MGVLWALFTLCFSILMVVTFI) traverse the membrane as a helical segment. Topologically, residues 46 to 98 (QPYWIGDSIDTPQAGYFGLFSYCIGNALTGELICKGSPLDFGTIPSSAFKTAM) are extracellular. Residues 99-119 (FFVGISTFLIIGSILCFSLFF) traverse the membrane as a helical segment. At 120-128 (FCNAATVYK) the chain is on the cytoplasmic side. A helical transmembrane segment spans residues 129-149 (VCAWMQLAAATGLMIGCLIYP). At 150–179 (DGWDSSEVKRMCGDKTDKYTLGACTVRWAY) the chain is on the extracellular side. Residues 180-200 (ILCIIGILDALILSFLAFVLG) traverse the membrane as a helical segment. The Cytoplasmic portion of the chain corresponds to 201–221 (NRQDNLLPSDFKVESKEEGNE).

This sequence belongs to the LHFP family.

The protein localises to the cell membrane. Functionally, probable component of the mechanotransducer (MET) non-specific cation channel complex. This is LHFPL tetraspan subfamily member 5 protein from Gallus gallus (Chicken).